The following is a 478-amino-acid chain: DNA-directed RNA polymerase II subunit RPB1 (478 aa).

Zn(2+) contacts are provided by Cys-68, Cys-71, Cys-78, His-81, Cys-108, Cys-111, and Cys-149. Mg(2+) contacts are provided by Asp-474 and Asp-476.

Belongs to the RNA polymerase beta' chain family. As to quaternary structure, component of the RNA polymerase II (Pol II) complex consisting of 12 subunits. In terms of processing, phosphorylation activates POL II.

It is found in the nucleus. It catalyses the reaction RNA(n) + a ribonucleoside 5'-triphosphate = RNA(n+1) + diphosphate. Functionally, DNA-dependent RNA polymerase catalyzes the transcription of DNA into RNA using the four ribonucleoside triphosphates as substrates. Largest and catalytic component of RNA polymerase II which synthesizes mRNA precursors and many functional non-coding RNAs. Forms the polymerase active center together with the second largest subunit. Pol II is the central component of the basal RNA polymerase II transcription machinery. It is composed of mobile elements that move relative to each other. RPB1 is part of the core element with the central large cleft, the clamp element that moves to open and close the cleft and the jaws that are thought to grab the incoming DNA template. At the start of transcription, a single-stranded DNA template strand of the promoter is positioned within the central active site cleft of Pol II. A bridging helix emanates from RPB1 and crosses the cleft near the catalytic site and is thought to promote translocation of Pol II by acting as a ratchet that moves the RNA-DNA hybrid through the active site by switching from straight to bent conformations at each step of nucleotide addition. During transcription elongation, Pol II moves on the template as the transcript elongates. Elongation is influenced by the phosphorylation status of the C-terminal domain (CTD) of Pol II largest subunit (RPB1), which serves as a platform for assembly of factors that regulate transcription initiation, elongation, termination and mRNA processing. This Euplotoides octocarinatus (Freshwater ciliate) protein is DNA-directed RNA polymerase II subunit RPB1 (RPB1).